Consider the following 743-residue polypeptide: Alpha-N-acetylglucosaminidase (743 aa).

The first 23 residues, 1–23, serve as a signal peptide directing secretion; it reads MEAVAVAAAVGVLLLAGAGGAAG. Asparagine 261, asparagine 272, asparagine 435, asparagine 503, asparagine 526, and asparagine 532 each carry an N-linked (GlcNAc...) asparagine glycan.

It belongs to the glycosyl hydrolase 89 family. In terms of assembly, monomer and homodimer. In terms of tissue distribution, liver, ovary, peripheral blood leukocytes, testis, prostate, spleen, colon, lung, placenta and kidney.

It is found in the lysosome. It carries out the reaction Hydrolysis of terminal non-reducing N-acetyl-D-glucosamine residues in N-acetyl-alpha-D-glucosaminides.. In terms of biological role, involved in the degradation of heparan sulfate. This is Alpha-N-acetylglucosaminidase (NAGLU) from Homo sapiens (Human).